A 192-amino-acid chain; its full sequence is Rhomboid protease GlpG (192 aa).

Over 1-10 the chain is Cytoplasmic; that stretch reads MKNFLAQQGK. The helical transmembrane segment at 11–31 threads the bilayer; that stretch reads ITLILTALCVLIYLAQQLGFE. Residues 32–57 are Periplasmic-facing; that stretch reads DDIMYLMHYPAYEEQDSEVWRYISHT. Residues 58–78 form a helical membrane-spanning segment; the sequence is LVHLSNLHILFNLSWFFIFGG. Over 79-82 the chain is Cytoplasmic; it reads MIER. Residues 83 to 103 traverse the membrane as a helical segment; it reads TFGSVKLLMLYVVASAITGYV. Residues 104-107 lie on the Periplasmic side of the membrane; the sequence is QNYV. The chain crosses the membrane as a helical span at residues 108-128; sequence SGPAFFGLSGVVYAVLGYVFI. Catalysis depends on Ser-116, which acts as the Nucleophile. Residues 129 to 141 lie on the Cytoplasmic side of the membrane; sequence RDKLNHHLFDLPE. Residues 142 to 162 form a helical membrane-spanning segment; sequence GFFTMLLVGIALGFISPLFGV. Position 163 (Glu-163) is a topological domain, periplasmic. Residues 164-184 traverse the membrane as a helical segment; that stretch reads MGNAAHISGLIVGLIWGFIDS. The active site involves His-169. Residues 185 to 192 are Cytoplasmic-facing; the sequence is KLRKNSLE.

Belongs to the peptidase S54 family.

Its subcellular location is the cell inner membrane. The catalysed reaction is Cleaves type-1 transmembrane domains using a catalytic dyad composed of serine and histidine that are contributed by different transmembrane domains.. Its function is as follows. Rhomboid-type serine protease that catalyzes intramembrane proteolysis. This Haemophilus influenzae (strain ATCC 51907 / DSM 11121 / KW20 / Rd) protein is Rhomboid protease GlpG (glpG).